Consider the following 318-residue polypeptide: Methionyl-tRNA formyltransferase (318 aa).

(6S)-5,6,7,8-tetrahydrofolate is bound at residue 110–113; the sequence is SLLP.

This sequence belongs to the Fmt family.

It catalyses the reaction L-methionyl-tRNA(fMet) + (6R)-10-formyltetrahydrofolate = N-formyl-L-methionyl-tRNA(fMet) + (6S)-5,6,7,8-tetrahydrofolate + H(+). Functionally, attaches a formyl group to the free amino group of methionyl-tRNA(fMet). The formyl group appears to play a dual role in the initiator identity of N-formylmethionyl-tRNA by promoting its recognition by IF2 and preventing the misappropriation of this tRNA by the elongation apparatus. This Lacticaseibacillus paracasei (strain ATCC 334 / BCRC 17002 / CCUG 31169 / CIP 107868 / KCTC 3260 / NRRL B-441) (Lactobacillus paracasei) protein is Methionyl-tRNA formyltransferase.